We begin with the raw amino-acid sequence, 291 residues long: Protein/nucleic acid deglycase HchA (291 aa).

The span at 1–18 shows a compositional bias: basic and acidic residues; that stretch reads MSNERDTSRTPTPDHAEH. The segment at 1-24 is disordered; the sequence is MSNERDTSRTPTPDHAEHNAFFPS. Cys-188 (nucleophile) is an active-site residue.

It belongs to the peptidase C56 family. HchA subfamily.

The protein localises to the cytoplasm. It catalyses the reaction N(omega)-(1-hydroxy-2-oxopropyl)-L-arginyl-[protein] + H2O = lactate + L-arginyl-[protein] + H(+). The enzyme catalyses N(6)-(1-hydroxy-2-oxopropyl)-L-lysyl-[protein] + H2O = lactate + L-lysyl-[protein] + H(+). The catalysed reaction is S-(1-hydroxy-2-oxopropyl)-L-cysteinyl-[protein] + H2O = lactate + L-cysteinyl-[protein] + H(+). It carries out the reaction N(omega)-(1-hydroxy-2-oxoethyl)-L-arginyl-[protein] + H2O = L-arginyl-[protein] + glycolate + H(+). It catalyses the reaction N(6)-(1-hydroxy-2-oxoethyl)-L-lysyl-[protein] + H2O = glycolate + L-lysyl-[protein] + H(+). The enzyme catalyses S-(1-hydroxy-2-oxoethyl)-L-cysteinyl-[protein] + H2O = glycolate + L-cysteinyl-[protein] + H(+). The catalysed reaction is N(2)-(1-hydroxy-2-oxopropyl)-dGTP + H2O = lactate + dGTP + H(+). It carries out the reaction N(2)-(1-hydroxy-2-oxopropyl)-GTP + H2O = lactate + GTP + H(+). It catalyses the reaction N(2)-(1-hydroxy-2-oxopropyl)-GDP + H2O = lactate + GDP + H(+). The enzyme catalyses N(2)-(1-hydroxy-2-oxopropyl)-GMP + H2O = lactate + GMP + H(+). The catalysed reaction is N(2)-(1-hydroxy-2-oxoethyl)-dGTP + H2O = dGTP + glycolate + H(+). It carries out the reaction N(2)-(1-hydroxy-2-oxoethyl)-GTP + H2O = glycolate + GTP + H(+). It catalyses the reaction N(2)-(1-hydroxy-2-oxoethyl)-GDP + H2O = glycolate + GDP + H(+). The enzyme catalyses N(2)-(1-hydroxy-2-oxoethyl)-GMP + H2O = glycolate + GMP + H(+). The catalysed reaction is an N(2)-(1-hydroxy-2-oxopropyl)-guanosine in RNA + H2O = a guanosine in RNA + lactate + H(+). It carries out the reaction an N(2)-(1-hydroxy-2-oxopropyl)-2'-deoxyguanosine in DNA + H2O = a 2'-deoxyguanosine in DNA + lactate + H(+). It catalyses the reaction an N(2)-(1-hydroxy-2-oxoethyl)-guanosine in RNA + H2O = a guanosine in RNA + glycolate + H(+). The enzyme catalyses an N(2)-(1-hydroxy-2-oxoethyl)-2'-deoxyguanosine in DNA + H2O = a 2'-deoxyguanosine in DNA + glycolate + H(+). Functionally, protein and nucleotide deglycase that catalyzes the deglycation of the Maillard adducts formed between amino groups of proteins or nucleotides and reactive carbonyl groups of glyoxals. Thus, functions as a protein deglycase that repairs methylglyoxal- and glyoxal-glycated proteins, and releases repaired proteins and lactate or glycolate, respectively. Deglycates cysteine, arginine and lysine residues in proteins, and thus reactivates these proteins by reversing glycation by glyoxals. Acts on early glycation intermediates (hemithioacetals and aminocarbinols), preventing the formation of Schiff bases and advanced glycation endproducts (AGE). Also functions as a nucleotide deglycase able to repair glycated guanine in the free nucleotide pool (GTP, GDP, GMP, dGTP) and in DNA and RNA. Is thus involved in a major nucleotide repair system named guanine glycation repair (GG repair), dedicated to reversing methylglyoxal and glyoxal damage via nucleotide sanitization and direct nucleic acid repair. Plays an important role in protecting cells from carbonyl stress. This chain is Protein/nucleic acid deglycase HchA, found in Pseudomonas aeruginosa (strain UCBPP-PA14).